Here is a 165-residue protein sequence, read N- to C-terminus: HTH-type transcriptional regulator IscR (165 aa).

An HTH rrf2-type domain is found at 2 to 131 (RLTSKGRYAV…NNITLAELVS (130 aa)). Residues 28 to 51 (LAEISERQGISLSYLEQLFSRLRK) constitute a DNA-binding region (H-T-H motif). Residues Cys-92, Cys-98, and Cys-104 each coordinate [2Fe-2S] cluster. The disordered stretch occupies residues 144–165 (NDTRRPLTNGRPQETINVNLHA). Residues 153-165 (GRPQETINVNLHA) show a composition bias toward polar residues.

[2Fe-2S] cluster serves as cofactor.

Functionally, regulates the transcription of several operons and genes involved in the biogenesis of Fe-S clusters and Fe-S-containing proteins. The sequence is that of HTH-type transcriptional regulator IscR from Sodalis glossinidius (strain morsitans).